Reading from the N-terminus, the 431-residue chain is 3-phosphoshikimate 1-carboxyvinyltransferase (431 aa).

Lys26, Ser27, and Arg31 together coordinate 3-phosphoshikimate. Lys26 contacts phosphoenolpyruvate. The phosphoenolpyruvate site is built by Gly99 and Arg127. Ser170, Ser171, Gln172, Ser199, Glu314, and His343 together coordinate 3-phosphoshikimate. Phosphoenolpyruvate is bound at residue Gln172. Glu314 functions as the Proton acceptor in the catalytic mechanism. Phosphoenolpyruvate is bound by residues Arg347, Arg388, and Lys413.

The protein belongs to the EPSP synthase family. As to quaternary structure, monomer.

The protein resides in the cytoplasm. It carries out the reaction 3-phosphoshikimate + phosphoenolpyruvate = 5-O-(1-carboxyvinyl)-3-phosphoshikimate + phosphate. The protein operates within metabolic intermediate biosynthesis; chorismate biosynthesis; chorismate from D-erythrose 4-phosphate and phosphoenolpyruvate: step 6/7. In terms of biological role, catalyzes the transfer of the enolpyruvyl moiety of phosphoenolpyruvate (PEP) to the 5-hydroxyl of shikimate-3-phosphate (S3P) to produce enolpyruvyl shikimate-3-phosphate and inorganic phosphate. The chain is 3-phosphoshikimate 1-carboxyvinyltransferase from Mycobacterium ulcerans (strain Agy99).